Here is a 339-residue protein sequence, read N- to C-terminus: NADH-quinone oxidoreductase subunit H (339 aa).

Helical transmembrane passes span 9 to 29 (IFPL…LILC), 50 to 70 (PNVV…KLLF), 82 to 102 (ILFI…WAVI), 115 to 135 (VGVL…IIAG), 161 to 181 (MGLV…SGII), 187 to 207 (MPWW…ISVL), 235 to 255 (MGFA…SAMT), 275 to 295 (IPGF…FLWI), and 311 to 331 (GWKV…SVLV).

Belongs to the complex I subunit 1 family. In terms of assembly, NDH-1 is composed of 14 different subunits. Subunits NuoA, H, J, K, L, M, N constitute the membrane sector of the complex.

The protein resides in the cell inner membrane. The catalysed reaction is a quinone + NADH + 5 H(+)(in) = a quinol + NAD(+) + 4 H(+)(out). Its function is as follows. NDH-1 shuttles electrons from NADH, via FMN and iron-sulfur (Fe-S) centers, to quinones in the respiratory chain. The immediate electron acceptor for the enzyme in this species is believed to be ubiquinone. Couples the redox reaction to proton translocation (for every two electrons transferred, four hydrogen ions are translocated across the cytoplasmic membrane), and thus conserves the redox energy in a proton gradient. This subunit may bind ubiquinone. In Rickettsia felis (strain ATCC VR-1525 / URRWXCal2) (Rickettsia azadi), this protein is NADH-quinone oxidoreductase subunit H.